The sequence spans 170 residues: Shikimate kinase (170 aa).

11 to 16 lines the ATP pocket; it reads LSGKST. Ser15 is a binding site for Mg(2+). Residues Asp33, Arg57, and Gly79 each contribute to the substrate site. Arg119 serves as a coordination point for ATP. Arg137 contacts substrate.

This sequence belongs to the shikimate kinase family. As to quaternary structure, monomer. It depends on Mg(2+) as a cofactor.

The protein localises to the cytoplasm. It carries out the reaction shikimate + ATP = 3-phosphoshikimate + ADP + H(+). It functions in the pathway metabolic intermediate biosynthesis; chorismate biosynthesis; chorismate from D-erythrose 4-phosphate and phosphoenolpyruvate: step 5/7. Functionally, catalyzes the specific phosphorylation of the 3-hydroxyl group of shikimic acid using ATP as a cosubstrate. In Clostridium botulinum (strain 657 / Type Ba4), this protein is Shikimate kinase.